The following is a 275-amino-acid chain: Elongation factor Ts (275 aa).

The segment at 76-79 (TDFV) is involved in Mg(2+) ion dislocation from EF-Tu.

It belongs to the EF-Ts family.

Its subcellular location is the cytoplasm. Functionally, associates with the EF-Tu.GDP complex and induces the exchange of GDP to GTP. It remains bound to the aminoacyl-tRNA.EF-Tu.GTP complex up to the GTP hydrolysis stage on the ribosome. This chain is Elongation factor Ts, found in Corynebacterium glutamicum (strain ATCC 13032 / DSM 20300 / JCM 1318 / BCRC 11384 / CCUG 27702 / LMG 3730 / NBRC 12168 / NCIMB 10025 / NRRL B-2784 / 534).